The sequence spans 157 residues: Small ribosomal subunit protein uS7 (157 aa).

It belongs to the universal ribosomal protein uS7 family. As to quaternary structure, part of the 30S ribosomal subunit. Contacts proteins S9 and S11.

Functionally, one of the primary rRNA binding proteins, it binds directly to 16S rRNA where it nucleates assembly of the head domain of the 30S subunit. Is located at the subunit interface close to the decoding center, probably blocks exit of the E-site tRNA. This Caulobacter sp. (strain K31) protein is Small ribosomal subunit protein uS7.